Here is a 129-residue protein sequence, read N- to C-terminus: uncharacterized protein (129 aa).

This sequence belongs to the HesB/IscA family.

This is an uncharacterized protein from Buchnera aphidicola subsp. Schizaphis graminum (strain Sg).